The chain runs to 658 residues: Ubiquilin-3 (658 aa).

A Ubiquitin-like domain is found at 22–96 (IRVTVKTPKD…VHLVIKMQRR (75 aa)). An STI1 domain is found at 194–233 (NPHMQHLIQQNPEIGHILNNPEIMRQTMEFLRNPSMMQEM). Over residues 280–291 (TATTASTTTTSS) the composition is skewed to low complexity. Disordered regions lie at residues 280–336 (TATT…RNRL) and 362–478 (YLQG…PESP). Over residues 312 to 323 (VSGGRQGRGGRQ) the composition is skewed to gly residues. Composition is skewed to polar residues over residues 362 to 379 (YLQG…SPLS), 389 to 400 (SSPKSGSGQSLP), and 438 to 469 (TGPS…SLMS). Residues 614-658 (QLEAHFRVQLEQLRAMGFLNLEANLQALIATEGDVDAAVEKLRKS) enclose the UBA domain.

Testis-specific (at protein level).

The polypeptide is Ubiquilin-3 (Ubqln3) (Mus musculus (Mouse)).